Reading from the N-terminus, the 208-residue chain is Small ribosomal subunit protein uS4 (208 aa).

One can recognise an S4 RNA-binding domain in the interval 98-159 (RRLDNVVYRL…KSRNVAAISE (62 aa)).

The protein belongs to the universal ribosomal protein uS4 family. In terms of assembly, part of the 30S ribosomal subunit. Contacts protein S5. The interaction surface between S4 and S5 is involved in control of translational fidelity.

In terms of biological role, one of the primary rRNA binding proteins, it binds directly to 16S rRNA where it nucleates assembly of the body of the 30S subunit. With S5 and S12 plays an important role in translational accuracy. This is Small ribosomal subunit protein uS4 from Trichlorobacter lovleyi (strain ATCC BAA-1151 / DSM 17278 / SZ) (Geobacter lovleyi).